A 90-amino-acid chain; its full sequence is Small ribosomal subunit protein uS17 (90 aa).

The protein belongs to the universal ribosomal protein uS17 family. In terms of assembly, part of the 30S ribosomal subunit.

One of the primary rRNA binding proteins, it binds specifically to the 5'-end of 16S ribosomal RNA. The sequence is that of Small ribosomal subunit protein uS17 from Paraburkholderia phytofirmans (strain DSM 17436 / LMG 22146 / PsJN) (Burkholderia phytofirmans).